A 1336-amino-acid chain; its full sequence is Aldehyde oxidase 4 (1336 aa).

The 88-residue stretch at 8–95 (DELIFFVNGK…GAAITTVEGV (88 aa)) folds into the 2Fe-2S ferredoxin-type domain. Residues Cys-47, Cys-52, Cys-55, and Cys-77 each contribute to the [2Fe-2S] cluster site. Gln-116 contacts Mo-molybdopterin. Residues Cys-117, Cys-120, Cys-152, and Cys-154 each coordinate [2Fe-2S] cluster. Cys-154 serves as a coordination point for Mo-molybdopterin. Residues 237–423 (FQGKRTTWII…LSIFIPYTAQ (187 aa)) enclose the FAD-binding PCMH-type domain. FAD contacts are provided by residues 265–272 (LVMGNTTV), Ala-346, Thr-355, His-359, Asp-368, and Ile-413. Residues 804-805 (AF), Leu-1045, 1086-1089 (GSMG), Gln-1201, and Leu-1265 contribute to the Mo-molybdopterin site. The active-site Proton acceptor; for azaheterocycle hydroxylase activity is the Glu-1267.

It belongs to the xanthine dehydrogenase family. In terms of assembly, homodimer. [2Fe-2S] cluster is required as a cofactor. FAD serves as cofactor. Requires Mo-molybdopterin as cofactor. As to expression, highly expressed in Harderian glands and sebaceous glands with detectable levels in the epidermis and other keratinized epithelia (at protein level). Detected in testis. The expression is 3 times greater in females than in males.

The protein resides in the cytoplasm. The enzyme catalyses an aldehyde + O2 + H2O = a carboxylate + H2O2 + H(+). It carries out the reaction retinal + O2 + H2O = retinoate + H2O2 + H(+). The catalysed reaction is all-trans-retinal + O2 + H2O = all-trans-retinoate + H2O2 + H(+). In terms of biological role, aldehyde oxidase able to catalyze the oxidation of retinaldehyde into retinoate. Is responsible for the major all-trans-retinaldehyde-metabolizing activity in the Harderian gland, and contributes a significant amount of the same activity in the skin. Is devoid of pyridoxal-oxidizing activity, in contrast to the other aldehyde oxidases. Acts as a negative modulator of the epidermal trophism. May be able to oxidize a wide variety of aldehydes into their corresponding carboxylates and to hydroxylate azaheterocycles. This chain is Aldehyde oxidase 4 (Aox4), found in Mus musculus (Mouse).